Here is a 344-residue protein sequence, read N- to C-terminus: 2-aminoethylphosphonate--pyruvate transaminase (344 aa).

At Lys-194 the chain carries N6-(pyridoxal phosphate)lysine.

It belongs to the class-V pyridoxal-phosphate-dependent aminotransferase family. PhnW subfamily. Homodimer. The cofactor is pyridoxal 5'-phosphate.

The catalysed reaction is (2-aminoethyl)phosphonate + pyruvate = phosphonoacetaldehyde + L-alanine. Its function is as follows. Involved in phosphonate degradation. This chain is 2-aminoethylphosphonate--pyruvate transaminase, found in Bacillus cereus.